We begin with the raw amino-acid sequence, 89 residues long: Large ribosomal subunit protein bL31B (89 aa).

It belongs to the bacterial ribosomal protein bL31 family. Type B subfamily. As to quaternary structure, part of the 50S ribosomal subunit.

The sequence is that of Large ribosomal subunit protein bL31B from Enterococcus faecalis (strain ATCC 700802 / V583).